Reading from the N-terminus, the 365-residue chain is Chorismate synthase (365 aa).

2 residues coordinate NADP(+): arginine 48 and arginine 54. FMN is bound by residues 125–127, 237–238, glycine 277, 292–296, and arginine 318; these read RSS, NA, and KPTSS.

Belongs to the chorismate synthase family. In terms of assembly, homotetramer. Requires FMNH2 as cofactor.

It catalyses the reaction 5-O-(1-carboxyvinyl)-3-phosphoshikimate = chorismate + phosphate. It participates in metabolic intermediate biosynthesis; chorismate biosynthesis; chorismate from D-erythrose 4-phosphate and phosphoenolpyruvate: step 7/7. Functionally, catalyzes the anti-1,4-elimination of the C-3 phosphate and the C-6 proR hydrogen from 5-enolpyruvylshikimate-3-phosphate (EPSP) to yield chorismate, which is the branch point compound that serves as the starting substrate for the three terminal pathways of aromatic amino acid biosynthesis. This reaction introduces a second double bond into the aromatic ring system. The polypeptide is Chorismate synthase (Polaromonas naphthalenivorans (strain CJ2)).